Reading from the N-terminus, the 166-residue chain is Large ribosomal subunit protein uL11 (166 aa).

This sequence belongs to the universal ribosomal protein uL11 family.

The polypeptide is Large ribosomal subunit protein uL11 (rpl12) (Dictyostelium discoideum (Social amoeba)).